We begin with the raw amino-acid sequence, 234 residues long: Pepsin inhibitor Dit33 (234 aa).

An N-terminal signal peptide occupies residues 1–17 (MKILFCFVLLAIAALRA). A disulfide bridge links Cys135 with Cys230. The tract at residues 200-222 (RHETSSQPSDATTISTTTQAPVE) is disordered. A compositionally biased stretch (polar residues) spans 204–219 (SSQPSDATTISTTTQA).

It belongs to the protease inhibitor I33 family.

It is found in the secreted. In terms of biological role, aspartyl protease inhibitor. This Dirofilaria immitis (Canine heartworm) protein is Pepsin inhibitor Dit33 (DIT33).